Here is a 317-residue protein sequence, read N- to C-terminus: Phospho-N-acetylmuramoyl-pentapeptide-transferase (317 aa).

Helical transmembrane passes span 6–26 (IVMAIVISFIVASILGPIIIP), 52–72 (PTIGGLIFIFATIITMFIMVG), 78–98 (AMIALYSFVGFGFVGFLDDLL), 114–134 (MILLLIVSGFLTWYAYKYIGT), 145–165 (INFGLFYIPFVMFYFAGVTNA), 171–191 (GLDGLATSVTVLVTTFLGIIS), 194–214 (LGHISLAIFCVALAGALLAFL), 223–244 (VFMGDTGSLALGGAVAMVALIL), and 297–317 (KIVSVFSIITVVFCFIAFASL).

The protein belongs to the glycosyltransferase 4 family. MraY subfamily. Mg(2+) is required as a cofactor.

Its subcellular location is the cell membrane. The catalysed reaction is UDP-N-acetyl-alpha-D-muramoyl-L-alanyl-gamma-D-glutamyl-meso-2,6-diaminopimeloyl-D-alanyl-D-alanine + di-trans,octa-cis-undecaprenyl phosphate = di-trans,octa-cis-undecaprenyl diphospho-N-acetyl-alpha-D-muramoyl-L-alanyl-D-glutamyl-meso-2,6-diaminopimeloyl-D-alanyl-D-alanine + UMP. It participates in cell wall biogenesis; peptidoglycan biosynthesis. In terms of biological role, catalyzes the initial step of the lipid cycle reactions in the biosynthesis of the cell wall peptidoglycan: transfers peptidoglycan precursor phospho-MurNAc-pentapeptide from UDP-MurNAc-pentapeptide onto the lipid carrier undecaprenyl phosphate, yielding undecaprenyl-pyrophosphoryl-MurNAc-pentapeptide, known as lipid I. The polypeptide is Phospho-N-acetylmuramoyl-pentapeptide-transferase (Clostridium perfringens (strain 13 / Type A)).